Consider the following 207-residue polypeptide: 2,3-bisphosphoglycerate-dependent phosphoglycerate mutase (207 aa).

Substrate is bound by residues 10–17, 23–24, Arg-62, 89–92, Lys-100, 116–117, and 160–161; these read RHGQSEWN, TG, ERDY, RR, and GN. His-11 acts as the Tele-phosphohistidine intermediate in catalysis. The Proton donor/acceptor role is filled by Glu-89.

It belongs to the phosphoglycerate mutase family. BPG-dependent PGAM subfamily. Homodimer.

It carries out the reaction (2R)-2-phosphoglycerate = (2R)-3-phosphoglycerate. It participates in carbohydrate degradation; glycolysis; pyruvate from D-glyceraldehyde 3-phosphate: step 3/5. Catalyzes the interconversion of 2-phosphoglycerate and 3-phosphoglycerate. The polypeptide is 2,3-bisphosphoglycerate-dependent phosphoglycerate mutase (Rhodopseudomonas palustris (strain BisB18)).